The sequence spans 305 residues: MQHPREENSIVVELEPSLATFIKQGFNNLVKWPLLNIGIVLSNTSTAVNEEWLTAVEHIPTMKIFYKHIHKILTREMGFLVYLKRSQSERDNYITLYDFDYYIIDKDTNSVTMVDKPTELKETLLHVFQEYRLKSSQTIELIAFSSGTVINEDIVSKLTFLDVEVFNREYNNVKTIIDPDFVFRSPFIVISPMGKLTFFVEVYSWFDFKSCFKDIIDFLEGALIANIHNHMIKVGDCDETVSSYNPESGMLFVNDLMTMNIVNFFGCNSRLESYHRFDMTKVDVELFIKALSDACKKILSASNRL.

This sequence belongs to the poxviridae DNA-directed RNA polymerase 35 kDa subunit family. The DNA-dependent RNA polymerase used for intermediate and late genes expression consists of eight subunits 147 kDa, 133 kDa, 35 kDa, 30 kDa, 22 kDa, 19 kDa, 18 kDa and 7 kDa totalling more than 500 kDa in mass. The same holoenzyme, with the addition of the transcription-specificity factor RAP94, is used for early gene expression.

The protein resides in the virion. It catalyses the reaction RNA(n) + a ribonucleoside 5'-triphosphate = RNA(n+1) + diphosphate. Its function is as follows. Part of the DNA-dependent RNA polymerase which catalyzes the transcription of viral DNA into RNA using the four ribonucleoside triphosphates as substrates. Responsible for the transcription of early, intermediate and late genes. DNA-dependent RNA polymerase associates with the early transcription factor (ETF), itself composed of D6 and A7, thereby allowing the early genes transcription. Late transcription, and probably also intermediate transcription, require newly synthesized RNA polymerase. This is DNA-directed RNA polymerase 35 kDa subunit (OPG156) from Homo sapiens (Human).